A 152-amino-acid chain; its full sequence is Large-conductance mechanosensitive channel (152 aa).

Helical transmembrane passes span 14 to 34 (VIDLAVGVVIGAAFGSIVKSL) and 84 to 104 (VGQFINSVVSFVLIAFSVFLL).

The protein belongs to the MscL family. In terms of assembly, homopentamer.

It localises to the cell inner membrane. In terms of biological role, channel that opens in response to stretch forces in the membrane lipid bilayer. May participate in the regulation of osmotic pressure changes within the cell. The chain is Large-conductance mechanosensitive channel from Laribacter hongkongensis (strain HLHK9).